Here is a 408-residue protein sequence, read N- to C-terminus: LL-diaminopimelate aminotransferase (408 aa).

Residues Tyr15 and Gly42 each contribute to the substrate site. Pyridoxal 5'-phosphate is bound by residues Tyr72, 108-109 (SK), Tyr132, Asn187, Tyr218, and 246-248 (SFS). Residues Lys109, Tyr132, and Asn187 each contribute to the substrate site. At Lys249 the chain carries N6-(pyridoxal phosphate)lysine. Positions 257 and 292 each coordinate pyridoxal 5'-phosphate. Residues Asn292 and Arg388 each contribute to the substrate site.

Belongs to the class-I pyridoxal-phosphate-dependent aminotransferase family. LL-diaminopimelate aminotransferase subfamily. In terms of assembly, homodimer. Requires pyridoxal 5'-phosphate as cofactor.

It catalyses the reaction (2S,6S)-2,6-diaminopimelate + 2-oxoglutarate = (S)-2,3,4,5-tetrahydrodipicolinate + L-glutamate + H2O + H(+). The protein operates within amino-acid biosynthesis; L-lysine biosynthesis via DAP pathway; LL-2,6-diaminopimelate from (S)-tetrahydrodipicolinate (aminotransferase route): step 1/1. Involved in the synthesis of meso-diaminopimelate (m-DAP or DL-DAP), required for both lysine and peptidoglycan biosynthesis. Catalyzes the direct conversion of tetrahydrodipicolinate to LL-diaminopimelate. This chain is LL-diaminopimelate aminotransferase, found in Prochlorococcus marinus (strain MIT 9313).